The sequence spans 394 residues: Glycerol-1-phosphate dehydrogenase [NAD(P)+] (394 aa).

NAD(+) is bound by residues aspartate 54, 116–120, and 138–141; these read GTIHD and TAPS. Aspartate 143 is a substrate binding site. Serine 147 provides a ligand contact to NAD(+). Aspartate 190 provides a ligand contact to substrate. The Ni(2+) site is built by aspartate 190 and histidine 270. Residue histidine 274 coordinates substrate. Histidine 290 is a Ni(2+) binding site.

This sequence belongs to the glycerol-1-phosphate dehydrogenase family. As to quaternary structure, homodimer. The cofactor is Ni(2+).

The protein resides in the cytoplasm. It carries out the reaction sn-glycerol 1-phosphate + NAD(+) = dihydroxyacetone phosphate + NADH + H(+). The catalysed reaction is sn-glycerol 1-phosphate + NADP(+) = dihydroxyacetone phosphate + NADPH + H(+). In terms of biological role, catalyzes the NAD(P)H-dependent reduction of dihydroxyacetonephosphate (DHAP or glycerone phosphate) to glycerol 1-phosphate (G1P). The G1P thus generated is probably used for the synthesis of phosphoglycerolipids in Gram-positive bacterial species. In Bacillus velezensis (strain DSM 23117 / BGSC 10A6 / LMG 26770 / FZB42) (Bacillus amyloliquefaciens subsp. plantarum), this protein is Glycerol-1-phosphate dehydrogenase [NAD(P)+].